A 169-amino-acid chain; its full sequence is Large ribosomal subunit protein uL10 (169 aa).

The protein belongs to the universal ribosomal protein uL10 family. As to quaternary structure, part of the ribosomal stalk of the 50S ribosomal subunit. The N-terminus interacts with L11 and the large rRNA to form the base of the stalk. The C-terminus forms an elongated spine to which L12 dimers bind in a sequential fashion forming a multimeric L10(L12)X complex.

Functionally, forms part of the ribosomal stalk, playing a central role in the interaction of the ribosome with GTP-bound translation factors. The polypeptide is Large ribosomal subunit protein uL10 (Rickettsia rickettsii (strain Iowa)).